The primary structure comprises 90 residues: DNA-directed RNA polymerase subunit Rpo5 (90 aa).

Belongs to the archaeal Rpo5/eukaryotic RPB5 RNA polymerase subunit family. As to quaternary structure, part of the RNA polymerase complex.

It localises to the cytoplasm. The enzyme catalyses RNA(n) + a ribonucleoside 5'-triphosphate = RNA(n+1) + diphosphate. Functionally, DNA-dependent RNA polymerase (RNAP) catalyzes the transcription of DNA into RNA using the four ribonucleoside triphosphates as substrates. The chain is DNA-directed RNA polymerase subunit Rpo5 from Aeropyrum pernix (strain ATCC 700893 / DSM 11879 / JCM 9820 / NBRC 100138 / K1).